The chain runs to 364 residues: 2-oxoglutarate-dependent dioxygenase imqE (364 aa).

Residues 73-92 (KQKAAHPPGPNPQRGWSGIG) are disordered. The 117-residue stretch at 199 to 315 (DGSELRLLHY…RWSAAYFFKA (117 aa)) folds into the Fe2OG dioxygenase domain. Fe cation contacts are provided by histidine 227, aspartate 229, and histidine 287. Arginine 306 contributes to the 2-oxoglutarate binding site.

Belongs to the iron/ascorbate-dependent oxidoreductase family. The cofactor is Fe(2+).

Its pathway is secondary metabolite biosynthesis. Functionally, 2-oxoglutarate-dependent dioxygenase; part of the gene cluster that mediates the biosynthesis of imizoquins A to D, tripeptide-derived alkaloids that serve a protective role against oxidative stress that are essential for normal germination. ImqB is a canonical three-module NRPS that assembles the tripeptide backbone of the imizoquins via condensation of Trp, Tyr, and Leu-derived precursors. N-methylation by imqF and phenol oxidation by imqC, followed by cyclization via the FAD-dependent oxidase imqH carry out the three-step transformation of L-tyrosine into tetrahydroisoquinoline. Importantly, this sequence requires the presence of a free amine in the tyrosine moiety, indicating that isoquinoline formation occurs prior to peptide bond formation. The imidazolidin-4-one ring of imizoquins could form following additional oxidation of the methyl-derived bridgehead carbon by imqH. Lastly, O-methylation by imqG and leucine hydroxylation by imqE complete biosynthesis of the imizoquins. This Aspergillus flavus (strain ATCC 200026 / FGSC A1120 / IAM 13836 / NRRL 3357 / JCM 12722 / SRRC 167) protein is 2-oxoglutarate-dependent dioxygenase imqE.